We begin with the raw amino-acid sequence, 622 residues long: Pyranose 2-oxidase (622 aa).

An N-terminal signal peptide occupies residues 1 to 28 (MSTSSSDPFYNFAKTSFKSAAAQKASAT). Positions 29–38 (SLPPLPGPDQ) are excised as a propeptide. A Tele-8alpha-FAD histidine modification is found at His-167. Substrate contacts are provided by Gln-448 and His-450. Catalysis depends on His-548, which acts as the Proton acceptor. The active site involves Asn-593.

It belongs to the GMC oxidoreductase family. In terms of assembly, homotetramer. It depends on FAD as a cofactor.

It localises to the periplasm. The enzyme catalyses D-glucose + O2 = 2-dehydro-D-glucose + H2O2. Its function is as follows. Catalyzes the oxidation of various aldopyranoses and disaccharides on carbon-2 to the corresponding 2-keto sugars concomitant with the reduction of O(2) to H(2)O(2). Plays an important role in lignin degradation of wood rot fungi by supplying the essential cosubstrate H(2)O(2) for the ligninolytic peroxidases, lignin peroxidase and manganese-dependent peroxidase. This chain is Pyranose 2-oxidase (p2ox), found in Trametes pubescens (White-rot fungus).